Reading from the N-terminus, the 530-residue chain is Calcium-dependent protein kinase 14 (530 aa).

Residue glycine 2 is the site of N-myristoyl glycine attachment. A Protein kinase domain is found at 54-312 (YKLGRELGRG…AQQVLDHPWI (259 aa)). ATP-binding positions include 60–68 (LGRGEFGVT) and lysine 83. The active-site Proton acceptor is aspartate 178. Position 218 is a phosphoserine (serine 218). The interval 318–348 (ASNVSLGETVRARLKQFSVMNKLKKRALRVI) is autoinhibitory domain. EF-hand domains lie at 355-390 (EETSCIKERFQVMDTSNRGKITITELGIGLQKLGIV), 391-426 (VPQDDIQILMDAGDVDKDGYLDVNEFVAISVHIRKL), 427-462 (GNDEHLKKAFTFFDKNKSGYIEIEELRDALADDVDT), and 463-498 (TSEEVVEAIILDVDTNKDGKISYDEFATMMKTGTDW). The Ca(2+) site is built by aspartate 368, serine 370, lysine 374, glutamate 379, aspartate 404, aspartate 406, aspartate 408, tyrosine 410, glutamate 415, aspartate 440, asparagine 442, serine 444, tyrosine 446, glutamate 451, aspartate 476, asparagine 478, aspartate 480, and lysine 482. The residue at position 484 (serine 484) is a Phosphoserine. A Ca(2+)-binding site is contributed by glutamate 487.

It belongs to the protein kinase superfamily. Ser/Thr protein kinase family. CDPK subfamily.

The protein localises to the membrane. It catalyses the reaction L-seryl-[protein] + ATP = O-phospho-L-seryl-[protein] + ADP + H(+). The enzyme catalyses L-threonyl-[protein] + ATP = O-phospho-L-threonyl-[protein] + ADP + H(+). Its activity is regulated as follows. Activated by calcium. Autophosphorylation may play an important role in the regulation of the kinase activity. Its function is as follows. May play a role in signal transduction pathways that involve calcium as a second messenger. This Arabidopsis thaliana (Mouse-ear cress) protein is Calcium-dependent protein kinase 14 (CPK14).